The primary structure comprises 228 residues: Auxin-responsive protein IAA16 (228 aa).

The EAR-like (transcriptional repression) motif lies at 19-23; that stretch reads LSLAL. The segment covering 28–39 has biased composition (polar residues); that stretch reads SSSGLQGNTSTA. 2 disordered regions span residues 28–57 and 70–90; these read SSSGLQGNTSTAADGAKGNDGFKASRPAAP and NLASSSSSSKPPRGGRDAAAA. A PB1 domain is found at 97 to 214; sequence ARFVKVNMDG…RVLRSSDLNA (118 aa).

This sequence belongs to the Aux/IAA family. As to quaternary structure, homodimers and heterodimers. In terms of tissue distribution, expressed in roots, flowers and seedlings.

It is found in the nucleus. Its function is as follows. Aux/IAA proteins are short-lived transcriptional factors that function as repressors of early auxin response genes at low auxin concentrations. This Oryza sativa subsp. japonica (Rice) protein is Auxin-responsive protein IAA16 (IAA16).